Reading from the N-terminus, the 577-residue chain is Beta-glucosidase 30 (577 aa).

The N-terminal stretch at 1–23 (MAKGSWFFIILFIISMLENMINS) is a signal peptide. A beta-D-glucoside contacts are provided by residues Gln45, His148, and 193-194 (NE). The Proton donor role is filled by Glu194. An intrachain disulfide couples Cys213 to Cys221. Residue Asn328 is glycosylated (N-linked (GlcNAc...) asparagine). Tyr338 lines the a beta-D-glucoside pocket. Asn368 carries N-linked (GlcNAc...) asparagine glycosylation. A beta-D-glucoside-binding positions include Glu410, Trp460, 467–468 (EW), and Phe476. Catalysis depends on Glu410, which acts as the Nucleophile. N-linked (GlcNAc...) asparagine glycans are attached at residues Asn524 and Asn544.

The protein belongs to the glycosyl hydrolase 1 family.

It carries out the reaction Hydrolysis of terminal, non-reducing beta-D-glucosyl residues with release of beta-D-glucose.. This chain is Beta-glucosidase 30, found in Arabidopsis thaliana (Mouse-ear cress).